A 550-amino-acid polypeptide reads, in one-letter code: Calcyphosin-2 (550 aa).

2 disordered regions span residues 1-20 (MVPP…DNFS) and 175-198 (ISDP…DSER). Residues 181–190 (DLNTKNQESS) show a composition bias toward polar residues. 3 EF-hand domains span residues 379 to 414 (RILT…FHLE), 415 to 452 (VSEQ…EMNE), and 453 to 488 (YRKS…KKHP). Residues aspartate 466, asparagine 468, threonine 470, and aspartate 477 each contribute to the Ca(2+) site.

The polypeptide is Calcyphosin-2 (Caps2) (Mus musculus (Mouse)).